Consider the following 32-residue polypeptide: Acyclotide phyb-M (32 aa).

Gln-1 bears the Pyrrolidone carboxylic acid mark. 3 disulfide bridges follow: Cys-5–Cys-21, Cys-9–Cys-23, and Cys-14–Cys-28.

Post-translationally, contains 3 disulfide bonds. In terms of tissue distribution, expressed in midvein, lamina and periphery of leaves (at protein level).

Functionally, probably participates in a plant defense mechanism. This is Acyclotide phyb-M from Petunia hybrida (Petunia).